We begin with the raw amino-acid sequence, 410 residues long: Divergent protein kinase domain 1C (410 aa).

Over 1–19 the chain is Cytoplasmic; that stretch reads MARAAGERGRAARCGRWRR. Positions 18–19 match the May mediate ER retention motif; it reads RR. The helical transmembrane segment at 20 to 40 threads the bilayer; sequence GALLAFAAWTAGWVLAAALLL. Over 41-410 the chain is Lumenal; it reads RAHPSVLSER…TLKELQEAEK (370 aa).

Belongs to the DIPK family. Post-translationally, among the many cysteines in the lumenal domain, most are probably involved in disulfide bonds. In terms of tissue distribution, mainly expressed in the brain and eye, some expression in kidney and skeletal muscle.

Its subcellular location is the endoplasmic reticulum membrane. This is Divergent protein kinase domain 1C (Dipk1c) from Mus musculus (Mouse).